The primary structure comprises 200 residues: Protein DMP7 (200 aa).

The next 4 membrane-spanning stretches (helical) occupy residues 37 to 57 (LSNL…PVLT), 69 to 89 (WLTC…SFTD), 129 to 149 (ILDF…SMFD), and 167 to 187 (ILTS…LAFP).

It belongs to the plant DMP1 protein family. As to expression, expressed in leaves, stems, flowers, siliques and roots, especially in the vasculature.

It is found in the endoplasmic reticulum membrane. In terms of biological role, involved in membrane remodeling. The polypeptide is Protein DMP7 (Arabidopsis thaliana (Mouse-ear cress)).